Reading from the N-terminus, the 100-residue chain is UPF0473 protein LMHCC_1068 (100 aa).

It belongs to the UPF0473 family.

The polypeptide is UPF0473 protein LMHCC_1068 (Listeria monocytogenes serotype 4a (strain HCC23)).